Reading from the N-terminus, the 159-residue chain is MMLRRLHHPILNPHTNILSVRYMQLTAYMLFVVCPLAVHLLELEDYDKRCRCNNQILLNTLPIGTELLKPIAASESCNRQEVLAILKDKGTKCLNPNAQAVRRHINRLFFRLILDEEQRIYDVVSTNIEFGAWPVPTAYKAFLWKYAKKLNYHHFRLRW.

2 cysteine pairs are disulfide-bonded: Cys-50/Cys-77 and Cys-52/Cys-93.

It belongs to the intercrine alpha (chemokine CxC) family.

The chain is Putative viral CXC chemokine 2 (UL147) from Human cytomegalovirus (strain Towne) (HHV-5).